A 413-amino-acid polypeptide reads, in one-letter code: Lysosomal phospholipase A and acyltransferase (413 aa).

The first 33 residues, 1–33, serve as a signal peptide directing secretion; that stretch reads MDRHLCICREIQLRSGLLFPFLLLMMLADLALP. Aspartate 46 is a substrate binding site. The cysteines at positions 65 and 89 are disulfide-linked. Asparagine 99 carries an N-linked (GlcNAc...) asparagine glycan. Serine 198 acts as the Acyl-ester intermediate in catalysis. Zn(2+) is bound at residue serine 198. Substrate is bound at residue methionine 199. Asparagine 273 and asparagine 289 each carry an N-linked (GlcNAc...) asparagine glycan. Cysteine 355 serves as a coordination point for Zn(2+). Catalysis depends on charge relay system residues aspartate 360 and histidine 392. Histidine 392 is a Zn(2+) binding site. Asparagine 398 carries an N-linked (GlcNAc...) asparagine glycan.

Belongs to the AB hydrolase superfamily. Lipase family. In terms of processing, N-glycosylated. N-glycosylation is important for maturation of the enzyme and normal subcellular location. In terms of tissue distribution, detected in alveolar macrophages (at protein level). Widely expressed. Expressed at highest levels in alveolar macrophages.

The protein localises to the lysosome. It is found in the secreted. The protein resides in the membrane. The enzyme catalyses a 1,2-diacyl-sn-glycero-3-phosphocholine + H2O = a 2-acyl-sn-glycero-3-phosphocholine + a fatty acid + H(+). It carries out the reaction 1,2-dihexadecanoyl-sn-glycero-3-phosphocholine + H2O = 2-hexadecanoyl-sn-glycero-3-phosphocholine + hexadecanoate + H(+). It catalyses the reaction 1-hexadecanoyl-2-(9Z-octadecenoyl)-sn-glycero-3-phosphocholine + H2O = 2-(9Z-octadecenoyl)-sn-glycero-3-phosphocholine + hexadecanoate + H(+). The catalysed reaction is 1,2-di-(9Z-octadecenoyl)-sn-glycero-3-phosphocholine + H2O = 2-(9Z-octadecenoyl)-sn-glycero-3-phosphocholine + (9Z)-octadecenoate + H(+). The enzyme catalyses 1-hexadecanoyl-2-glutaroyl-sn-glycero-3-phosphocholine + H2O = 2-glutaroyl-sn-glycero-3-phosphocholine + hexadecanoate + H(+). It carries out the reaction 1-hexadecanoyl-2-nonadioyl-sn-glycero-3-phosphocholine + H2O = 2-nonadioyl-sn-glycero-3-phosphocholine + hexadecanoate + H(+). It catalyses the reaction 1-hexadecanoyl-2-(5-oxopentanoyl)-sn-glycero-3-phosphocholine + H2O = 2-(5-oxopentanoyl)-sn-glycero-3-phosphocholine + hexadecanoate + H(+). The catalysed reaction is 1-hexadecanoyl-2-(9-oxononanoyl)-sn-glycero-3-phosphocholine + H2O = 2-(9-oxononanoyl)-sn-glycero-3-phosphocholine + hexadecanoate + H(+). The enzyme catalyses a 1,2-diacyl-sn-glycero-3-phosphocholine + H2O = a 1-acyl-sn-glycero-3-phosphocholine + a fatty acid + H(+). It carries out the reaction 1,2-dihexadecanoyl-sn-glycero-3-phosphocholine + H2O = 1-hexadecanoyl-sn-glycero-3-phosphocholine + hexadecanoate + H(+). It catalyses the reaction 1-hexadecanoyl-2-(9Z-octadecenoyl)-sn-glycero-3-phosphocholine + H2O = 1-hexadecanoyl-sn-glycero-3-phosphocholine + (9Z)-octadecenoate + H(+). The catalysed reaction is 1,2-di-(9Z-octadecenoyl)-sn-glycero-3-phosphocholine + H2O = 1-(9Z-octadecenoyl)-sn-glycero-3-phosphocholine + (9Z)-octadecenoate + H(+). The enzyme catalyses a 1-acyl-sn-glycero-3-phosphocholine + H2O = sn-glycerol 3-phosphocholine + a fatty acid + H(+). It carries out the reaction 1-hexadecanoyl-sn-glycero-3-phosphocholine + H2O = sn-glycerol 3-phosphocholine + hexadecanoate + H(+). It catalyses the reaction N-(acetyl)-sphing-4-enine + a 1,2-diacyl-sn-glycero-3-phosphoethanolamine = 1-O-acyl-N-(acetyl)-sphing-4-enine + a 2-acyl-sn-glycero-3-phosphoethanolamine. The catalysed reaction is 1-hexadecanoyl-2-(9Z-octadecenoyl)-sn-glycero-3-phosphoethanolamine + N-(acetyl)-sphing-4-enine = 2-(9Z-octadecenoyl)-sn-glycero-3-phosphoethanolamine + 1-hexadecanoyl-N-(acetyl)-sphing-4-enine. The enzyme catalyses 1-hexadecanoyl-2-(9Z,12Z-octadecadienoyl)-sn-glycero-3-phosphoethanolamine + N-(acetyl)-sphing-4-enine = 2-(9Z,12Z)-octadecadienoyl-sn-glycero-3-phosphoethanolamine + 1-hexadecanoyl-N-(acetyl)-sphing-4-enine. It carries out the reaction 1-hexadecanoyl-2-(5Z,8Z,11Z,14Z-eicosatetraenoyl)-sn-glycero-3-phosphoethanolamine + N-(acetyl)-sphing-4-enine = 2-(5Z,8Z,11Z,14Z)-eicosatetraenoyl-sn-glycero-3-phosphoethanolamine + 1-hexadecanoyl-N-(acetyl)-sphing-4-enine. It catalyses the reaction N-(acetyl)-sphing-4-enine + a 1,2-diacyl-sn-glycero-3-phosphoethanolamine = 1-O-acyl-N-(acetyl)-sphing-4-enine + a 1-acyl-sn-glycero-3-phosphoethanolamine. The catalysed reaction is 1-hexadecanoyl-2-(9Z-octadecenoyl)-sn-glycero-3-phosphoethanolamine + N-(acetyl)-sphing-4-enine = 1-(9Z-octadecenoyl)-N-(acetyl)-sphing-4-enine + 1-hexadecanoyl-sn-glycero-3-phosphoethanolamine. The enzyme catalyses 1-hexadecanoyl-2-(9Z,12Z-octadecadienoyl)-sn-glycero-3-phosphoethanolamine + N-(acetyl)-sphing-4-enine = 1-(9Z,12Z-octadecadienoyl)-N-acetylsphing-4-enine + 1-hexadecanoyl-sn-glycero-3-phosphoethanolamine. It carries out the reaction 1-hexadecanoyl-2-(5Z,8Z,11Z,14Z-eicosatetraenoyl)-sn-glycero-3-phosphoethanolamine + N-(acetyl)-sphing-4-enine = 1-(5Z,8Z,11Z,14Z)-eicosatetraenoyl-N-(acetyl)-sphing-4-enine + 1-hexadecanoyl-sn-glycero-3-phosphoethanolamine. It catalyses the reaction N-(acetyl)-sphing-4-enine + a 1,2-diacyl-sn-glycero-3-phosphocholine = 1-O-acyl-N-(acetyl)-sphing-4-enine + a 2-acyl-sn-glycero-3-phosphocholine. The catalysed reaction is 1-hexadecanoyl-2-(9Z-octadecenoyl)-sn-glycero-3-phosphocholine + N-(acetyl)-sphing-4-enine = 1-hexadecanoyl-N-(acetyl)-sphing-4-enine + 2-(9Z-octadecenoyl)-sn-glycero-3-phosphocholine. The enzyme catalyses 1-hexadecanoyl-2-(9Z,12Z-octadecadienoyl)-sn-glycero-3-phosphocholine + N-(acetyl)-sphing-4-enine = 2-(9Z,12Z-octadecadienoyl)-sn-glycero-3-phosphocholine + 1-hexadecanoyl-N-(acetyl)-sphing-4-enine. It carries out the reaction 1-hexadecanoyl-2-(5Z,8Z,11Z,14Z-eicosatetraenoyl)-sn-glycero-3-phosphocholine + N-(acetyl)-sphing-4-enine = 1-hexadecanoyl-N-(acetyl)-sphing-4-enine + 2-(5Z,8Z,11Z,14Z)-eicosatetraenoyl-sn-glycero-3-phosphocholine. It catalyses the reaction 1-hexadecanoyl-2-(4Z,7Z,10Z,13Z,16Z,19Z-docosahexaenoyl)-sn-glycero-3-phosphocholine + N-(acetyl)-sphing-4-enine = 2-(4Z,7Z,10Z,13Z,16Z,19Z-docosahexaenoyl)-sn-glycero-3-phosphocholine + 1-hexadecanoyl-N-(acetyl)-sphing-4-enine. The catalysed reaction is 1-hexadecanoyl-2-nonadioyl-sn-glycero-3-phosphocholine + N-(acetyl)-sphing-4-enine = 2-nonadioyl-sn-glycero-3-phosphocholine + 1-hexadecanoyl-N-(acetyl)-sphing-4-enine. The enzyme catalyses 1-octadecanoyl-2-(9Z-octadecenoyl)-sn-glycero-3-phosphocholine + N-(acetyl)-sphing-4-enine = 1-octadecanoyl-N-(acetyl)-sphing-4-enine + 2-(9Z-octadecenoyl)-sn-glycero-3-phosphocholine. It carries out the reaction 1-(9Z)-octadecenoyl-2-octadecanoyl-sn-glycero-3-phosphocholine + N-(acetyl)-sphing-4-enine = 2-octadecanoyl-sn-glycero-3-phosphocholine + 1-(9Z-octadecenoyl)-N-(acetyl)-sphing-4-enine. It catalyses the reaction 1-octadecanoyl-2-(5Z,8Z,11Z,14Z-eicosatetraenoyl)-sn-glycero-3-phosphocholine + N-(acetyl)-sphing-4-enine = 1-octadecanoyl-N-(acetyl)-sphing-4-enine + 2-(5Z,8Z,11Z,14Z)-eicosatetraenoyl-sn-glycero-3-phosphocholine. The catalysed reaction is 1-(9Z-octadecenoyl)-2-hexadecanoyl-sn-glycero-3-phosphocholine + N-(acetyl)-sphing-4-enine = 1-(9Z-octadecenoyl)-N-(acetyl)-sphing-4-enine + 2-hexadecanoyl-sn-glycero-3-phosphocholine. The enzyme catalyses N-(acetyl)-sphing-4-enine + a 1,2-diacyl-sn-glycero-3-phosphocholine = 1-O-acyl-N-(acetyl)-sphing-4-enine + a 1-acyl-sn-glycero-3-phosphocholine. It carries out the reaction 1-hexadecanoyl-2-(9Z-octadecenoyl)-sn-glycero-3-phosphocholine + N-(acetyl)-sphing-4-enine = 1-(9Z-octadecenoyl)-N-(acetyl)-sphing-4-enine + 1-hexadecanoyl-sn-glycero-3-phosphocholine. It catalyses the reaction 1-hexadecanoyl-2-(9Z,12Z-octadecadienoyl)-sn-glycero-3-phosphocholine + N-(acetyl)-sphing-4-enine = 1-(9Z,12Z-octadecadienoyl)-N-acetylsphing-4-enine + 1-hexadecanoyl-sn-glycero-3-phosphocholine. The catalysed reaction is 1-hexadecanoyl-2-(5Z,8Z,11Z,14Z-eicosatetraenoyl)-sn-glycero-3-phosphocholine + N-(acetyl)-sphing-4-enine = 1-(5Z,8Z,11Z,14Z)-eicosatetraenoyl-N-(acetyl)-sphing-4-enine + 1-hexadecanoyl-sn-glycero-3-phosphocholine. The enzyme catalyses 1-hexadecanoyl-2-(4Z,7Z,10Z,13Z,16Z,19Z-docosahexaenoyl)-sn-glycero-3-phosphocholine + N-(acetyl)-sphing-4-enine = 1-(4Z,7Z,10Z,13Z,16Z,19Z-docosahexaenoyl)-N-(acetyl)-sphing-4-enine + 1-hexadecanoyl-sn-glycero-3-phosphocholine. It carries out the reaction 1-octadecanoyl-2-(9Z-octadecenoyl)-sn-glycero-3-phosphocholine + N-(acetyl)-sphing-4-enine = 1-(9Z-octadecenoyl)-N-(acetyl)-sphing-4-enine + 1-octadecanoyl-sn-glycero-3-phosphocholine. It catalyses the reaction 1-octadecanoyl-2-(9Z,12Z)-octadecadienoyl-sn-glycero-3-phosphocholine + N-(acetyl)-sphing-4-enine = 1-(9Z,12Z-octadecadienoyl)-N-acetylsphing-4-enine + 1-octadecanoyl-sn-glycero-3-phosphocholine. The catalysed reaction is 1-(9Z-octadecenoyl)-2-hexadecanoyl-sn-glycero-3-phosphocholine + N-(acetyl)-sphing-4-enine = 1-hexadecanoyl-N-(acetyl)-sphing-4-enine + 1-(9Z-octadecenoyl)-sn-glycero-3-phosphocholine. The enzyme catalyses 1-(9Z)-octadecenoyl-2-octadecanoyl-sn-glycero-3-phosphocholine + N-(acetyl)-sphing-4-enine = 1-octadecanoyl-N-(acetyl)-sphing-4-enine + 1-(9Z-octadecenoyl)-sn-glycero-3-phosphocholine. It carries out the reaction 1,2-di-(9Z-octadecenoyl)-sn-glycero-3-phosphocholine + N-(acetyl)-sphing-4-enine = 1-(9Z-octadecenoyl)-N-(acetyl)-sphing-4-enine + 1-(9Z-octadecenoyl)-sn-glycero-3-phosphocholine. It catalyses the reaction 1-octadecanoyl-2-(5Z,8Z,11Z,14Z-eicosatetraenoyl)-sn-glycero-3-phosphocholine + N-(acetyl)-sphing-4-enine = 1-(5Z,8Z,11Z,14Z)-eicosatetraenoyl-N-(acetyl)-sphing-4-enine + 1-octadecanoyl-sn-glycero-3-phosphocholine. The catalysed reaction is a 1,2-diacyl-sn-glycero-3-phospho-L-serine + N-(acetyl)-sphing-4-enine = a 2-acyl-sn-glycero-3-phospho-L-serine + 1-O-acyl-N-(acetyl)-sphing-4-enine. The enzyme catalyses 1-octadecanoyl-2-(9Z-octadecenoyl)-sn-glycero-3-phospho-L-serine + N-(acetyl)-sphing-4-enine = 2-(9Z-octadecenoyl)-sn-glycero-3-phospho-L-serine + 1-octadecanoyl-N-(acetyl)-sphing-4-enine. It carries out the reaction a 1,2-diacyl-sn-glycero-3-phospho-L-serine + N-(acetyl)-sphing-4-enine = 1-O-acyl-N-(acetyl)-sphing-4-enine + a 1-acyl-sn-glycero-3-phospho-L-serine. It catalyses the reaction 1-octadecanoyl-2-(9Z-octadecenoyl)-sn-glycero-3-phospho-L-serine + N-(acetyl)-sphing-4-enine = 1-octadecanoyl-sn-glycero-3-phosphoserine + 1-(9Z-octadecenoyl)-N-(acetyl)-sphing-4-enine. The catalysed reaction is a 1,2-diacyl-sn-glycero-3-phospho-(1'-sn-glycerol) + N-(acetyl)-sphing-4-enine = 2-acyl-sn-glycero-3-phospho-(1'-sn-glycerol) + 1-O-acyl-N-(acetyl)-sphing-4-enine. The enzyme catalyses 1-octadecanoyl-2-(9Z-octadecenoyl)-sn-glycero-3-phospho-(1'-sn-glycerol) + N-(acetyl)-sphing-4-enine = 2-(9Z-octadecenoyl)-sn-glycero-3-phospho-(1'-sn-glycerol) + 1-octadecanoyl-N-(acetyl)-sphing-4-enine. It carries out the reaction a 1,2-diacyl-sn-glycero-3-phospho-(1'-sn-glycerol) + N-(acetyl)-sphing-4-enine = 1-O-acyl-N-(acetyl)-sphing-4-enine + 1-acyl-sn-glycero-3-phospho-(1'-sn-glycerol). It catalyses the reaction 1-octadecanoyl-2-(9Z-octadecenoyl)-sn-glycero-3-phospho-(1'-sn-glycerol) + N-(acetyl)-sphing-4-enine = 1-octadecanoyl-sn-glycero-3-phospho-(1'-sn-glycerol) + 1-(9Z-octadecenoyl)-N-(acetyl)-sphing-4-enine. The catalysed reaction is an N-acylethanolamine + a 1,2-diacyl-sn-glycero-3-phosphocholine = 2-(acylamino)ethyl fatty acid + a 2-acyl-sn-glycero-3-phosphocholine. The enzyme catalyses an N-acylethanolamine + a 1,2-diacyl-sn-glycero-3-phosphocholine = 2-(acylamino)ethyl fatty acid + a 1-acyl-sn-glycero-3-phosphocholine. It carries out the reaction N-(5Z,8Z,11Z,14Z-eicosatetraenoyl)-ethanolamine + 1,2-di-(9Z-octadecenoyl)-sn-glycero-3-phosphocholine = 2-[(5Z,8Z,11Z,14Z)-eicosatetraenoylamino]ethyl (9Z)-octadecenoate + (9Z-octadecenoyl)-sn-glycero-3-phosphocholine. It catalyses the reaction N-(9Z-octadecenoyl) ethanolamine + 1,2-di-(9Z-octadecenoyl)-sn-glycero-3-phosphocholine = 2-[(9Z)-octadecenoylamino]ethyl (9Z)-octadecenoate + (9Z-octadecenoyl)-sn-glycero-3-phosphocholine. The catalysed reaction is a 3-acyl-sn-glycerol + a 1,2-diacyl-sn-glycero-3-phosphocholine = a 1,3-diacylglycerol + a 1-acyl-sn-glycero-3-phosphocholine. The enzyme catalyses a 3-acyl-sn-glycerol + a 1,2-diacyl-sn-glycero-3-phosphocholine = a 1,3-diacylglycerol + a 2-acyl-sn-glycero-3-phosphocholine. It carries out the reaction 3-(9Z-octadecenoyl)-sn-glycerol + 1,2-di-(9Z-octadecenoyl)-sn-glycero-3-phosphocholine = 1,3-di-(9Z-octadecenoyl)-glycerol + (9Z-octadecenoyl)-sn-glycero-3-phosphocholine. It catalyses the reaction 3-hexadecanoyl-sn-glycerol + 1,2-di-(9Z-octadecenoyl)-sn-glycero-3-phosphocholine = 1-(9Z)-octadecenoyl-3-hexadecanoyl-sn-glycerol + (9Z-octadecenoyl)-sn-glycero-3-phosphocholine. The catalysed reaction is a 1-acyl-sn-glycerol + a 1,2-diacyl-sn-glycero-3-phosphocholine = a 1,3-diacylglycerol + a 2-acyl-sn-glycero-3-phosphocholine. The enzyme catalyses a 1-acyl-sn-glycerol + a 1,2-diacyl-sn-glycero-3-phosphocholine = a 1,3-diacylglycerol + a 1-acyl-sn-glycero-3-phosphocholine. It carries out the reaction 1-(9Z-octadecenoyl)-sn-glycerol + 1,2-di-(9Z-octadecenoyl)-sn-glycero-3-phosphocholine = 1,3-di-(9Z-octadecenoyl)-glycerol + (9Z-octadecenoyl)-sn-glycero-3-phosphocholine. It catalyses the reaction 1-hexadecanoyl-sn-glycerol + 1,2-di-(9Z-octadecenoyl)-sn-glycero-3-phosphocholine = 1-hexadecanoyl-3-(9Z)-octadecenoyl-sn-glycerol + (9Z-octadecenoyl)-sn-glycero-3-phosphocholine. The catalysed reaction is a 2-acylglycerol + a 1,2-diacyl-sn-glycero-3-phosphocholine = a 1,2-diacylglycerol + a 2-acyl-sn-glycero-3-phosphocholine. The enzyme catalyses a 2-acylglycerol + a 1,2-diacyl-sn-glycero-3-phosphocholine = a 1,2-diacylglycerol + a 1-acyl-sn-glycero-3-phosphocholine. It carries out the reaction 2-hexadecanoylglycerol + 1,2-di-(9Z-octadecenoyl)-sn-glycero-3-phosphocholine = 1-(9Z)-octadecenoyl-2-hexadecanoylglycerol + (9Z-octadecenoyl)-sn-glycero-3-phosphocholine. It catalyses the reaction 1-O-alkylglycerol + a 1,2-diacyl-sn-glycero-3-phosphocholine = 1-O-alkyl-3-acylglycerol + a 1-acyl-sn-glycero-3-phosphocholine. The catalysed reaction is 1-O-alkylglycerol + a 1,2-diacyl-sn-glycero-3-phosphocholine = 1-O-alkyl-3-acylglycerol + a 2-acyl-sn-glycero-3-phosphocholine. The enzyme catalyses 1-O-hexadecylglycerol + 1,2-di-(9Z-octadecenoyl)-sn-glycero-3-phosphocholine = 1-O-hexadecyl-3-(9Z)-octadecenoylglycerol + (9Z-octadecenoyl)-sn-glycero-3-phosphocholine. It carries out the reaction 1-O-alkyl-2-acyl-sn-glycerol + a 1,2-diacyl-sn-glycero-3-phosphocholine = 1-O-alkyl-2,3-diacyl-sn-glycerol + a 2-acyl-sn-glycero-3-phosphocholine. It catalyses the reaction 1-O-alkyl-2-acyl-sn-glycerol + a 1,2-diacyl-sn-glycero-3-phosphocholine = 1-O-alkyl-2,3-diacyl-sn-glycerol + a 1-acyl-sn-glycero-3-phosphocholine. The catalysed reaction is 1-O-hexadecyl-2-acetyl-sn-glycerol + 1,2-di-(9Z-octadecenoyl)-sn-glycero-3-phosphocholine = 1-O-hexadecyl-2-acetyl-3-(9Z)-octadecenoyl-sn-glycerol + (9Z-octadecenoyl)-sn-glycero-3-phosphocholine. The enzyme catalyses 1-O-hexadecyl-2-O-methyl-sn-glycerol + 1,2-di-(9Z-octadecenoyl)-sn-glycero-3-phosphocholine = 1-O-hexadecyl-2-O-methyl-3-(9Z)-octadecenoyl-sn-glycerol + (9Z-octadecenoyl)-sn-glycero-3-phosphocholine. It carries out the reaction a 1,2-diacyl-sn-glycero-3-phosphoethanolamine + H2O = a 1-acyl-sn-glycero-3-phosphoethanolamine + a fatty acid + H(+). It catalyses the reaction 1-acyl-2-(5Z,8Z,11Z,14Z)-eicosatetraenoyl-sn-glycero-3-phosphoethanolamine + H2O = a 1-acyl-sn-glycero-3-phosphoethanolamine + (5Z,8Z,11Z,14Z)-eicosatetraenoate + H(+). The catalysed reaction is a 1,2-diacyl-sn-glycero-3-phospho-(1'-sn-glycerol) + H2O = 1-acyl-sn-glycero-3-phospho-(1'-sn-glycerol) + a fatty acid + H(+). The enzyme catalyses 1-hexadecanoyl-2-(9Z-octadecenoyl)-sn-glycero-3-phospho-(1'-sn-glycerol) + H2O = 1-hexadecanoyl-sn-glycero-3-phospho-(1'-sn-glycerol) + (9Z)-octadecenoate + H(+). It carries out the reaction a 1,2-diacyl-sn-glycero-3-phospho-(1'-sn-glycerol) + H2O = 2-acyl-sn-glycero-3-phospho-(1'-sn-glycerol) + a fatty acid + H(+). It catalyses the reaction 1-hexadecanoyl-2-(9Z-octadecenoyl)-sn-glycero-3-phospho-(1'-sn-glycerol) + H2O = 2-(9Z-octadecenoyl)-sn-glycero-3-phospho-(1'-sn-glycerol) + hexadecanoate + H(+). Its activity is regulated as follows. Transacylase activity is inhibited by MJ33. Functionally, has dual calcium-independent phospholipase and O-acyltransferase activities with a potential role in glycerophospholipid homeostasis and remodeling of acyl groups of lipophilic alcohols present in acidic cellular compartments. Catalyzes hydrolysis of the ester bond of the fatty acyl group attached at sn-1 or sn-2 position of phospholipids (phospholipase A1 or A2 activity) and transfer it to the hydroxyl group at the first carbon of lipophilic alcohols (O-acyltransferase activity). Among preferred fatty acyl donors are phosphatidylcholines, phosphatidylethanolamines, phosphatidylglycerols and phosphatidylserines. Favors sn-2 over sn-1 deacylation of unsaturated fatty acyl groups of phosphatidylcholines, phosphatidylethanolamines, and phosphatidylglycerols. Among preferred fatty acyl acceptors are natural lipophilic alcohols including short-chain ceramide N-acetyl-sphingosine (C2 ceramide), alkylacylglycerols, monoacylglycerols, and acylethanolamides such as anandamide and oleoylethanolamide. Selectively hydrolyzes the sn-1 fatty acyl group of truncated oxidized phospholipids and may play a role in detoxification of reactive oxidized phospholipids during oxidative stress. Required for normal phospholipid degradation in alveolar macrophages with potential implications in the clearance of pulmonary surfactant, which is mainly composed of dipalmitoylphosphatidylcholine (1,2-dihexadecanoyl-sn-glycero-3-phosphocholine). Involved in the first step of bis(monoacylglycero)phosphate (BMP) de novo synthesis from phosphatidylglycerol (1,2-diacyl-sn-glycero-3-phospho-(1'-sn-glycerol), PG). BMP is an important player in cargo sorting and degradation, regulation of cellular cholesterol levels and intercellular communication. At neutral pH, hydrolyzes the sn-1 fatty acyl group of the lysophosphatidylcholines. The sequence is that of Lysosomal phospholipase A and acyltransferase (Pla2g15) from Rattus norvegicus (Rat).